The primary structure comprises 452 residues: Pre-mRNA-splicing factor prp46 (452 aa).

The span at 61–70 (AAKQAQAAAA) shows a compositional bias: low complexity. Residues 61-129 (AAKQAQAAAA…SATRQQPPEW (69 aa)) are disordered. A compositionally biased stretch (polar residues) spans 114-125 (SLIQRPSATRQQ). 7 WD repeats span residues 141–180 (GHLG…LRLT), 183–222 (GHIS…VIRH), 225–264 (GHLS…NIHV), 267–308 (GHTG…GVLT), 310–349 (HKKG…QNFE), 350–388 (GHNA…RYQT), and 399–438 (EAEA…TPET). A disordered region spans residues 432–452 (DQATPETHPVTWAPTLGRQRY).

It belongs to the WD repeat PRL1/PRL2 family. In terms of assembly, associated with the spliceosome.

The protein resides in the cytoplasm. It is found in the nucleus. Its function is as follows. Involved in pre-mRNA splicing and required for cell cycle progression at G2/M. This is Pre-mRNA-splicing factor prp46 (prp46) from Emericella nidulans (strain FGSC A4 / ATCC 38163 / CBS 112.46 / NRRL 194 / M139) (Aspergillus nidulans).